The chain runs to 117 residues: Prefoldin subunit beta (117 aa).

This sequence belongs to the prefoldin subunit beta family. As to quaternary structure, heterohexamer of two alpha and four beta subunits.

Its subcellular location is the cytoplasm. Its function is as follows. Molecular chaperone capable of stabilizing a range of proteins. Seems to fulfill an ATP-independent, HSP70-like function in archaeal de novo protein folding. The sequence is that of Prefoldin subunit beta from Thermococcus gammatolerans (strain DSM 15229 / JCM 11827 / EJ3).